Reading from the N-terminus, the 486-residue chain is MNYLPIFVDLKNRPVLVVGGGHVAVRKIYALLKADALVKVVAEKLHSSLQILVNEGKVEWLAKAFEASQVTSSYLVIAATDDNALNQQVFDTAESQQRLVNVVDDQPRCSYIFPSIIDRSPVQIAISSGGAAPVLIRLLREKLEALIPHNLGAMADIATRWRSAVKTQFPQLTQRRRFWEKLFTHQSFQRLTENHQIEQAEALVESELQNNNPVLGEVSLVGAGPGDAGLLTLKGLQTIQQADVVLYDALVSEAVLELVRRDADKVFVGKRAGKHSVKQDDTNQLLVKYAKQGKRVVRLKGGDPFVFGRGGEELEILKAENIPFSVVPGITAALGATAYAGIPLTHRDHAQTAMFITGHLKPDGNRLKWETLAQGNQTLVVYMGTIKAAELSAELQKHGKPSDTPVAIISNGTLPNQQVQTGVLSELAELAEKAPTPALIVIGEVVKLQKDLAWFGKEAVQFVSTQETLWQKPTLQNKETHWKQAA.

Residues 1 to 204 are precorrin-2 dehydrogenase /sirohydrochlorin ferrochelatase; that stretch reads MNYLPIFVDL…HQIEQAEALV (204 aa). Residues 22-23 and 43-44 contribute to the NAD(+) site; these read HV and EK. Ser-128 carries the post-translational modification Phosphoserine. Residues 216–486 form a uroporphyrinogen-III C-methyltransferase region; sequence GEVSLVGAGP…NKETHWKQAA (271 aa). Pro-225 contacts S-adenosyl-L-methionine. The active-site Proton acceptor is Asp-248. Lys-270 serves as the catalytic Proton donor. S-adenosyl-L-methionine-binding positions include 301-303, Val-306, 331-332, Met-383, and Gly-412; these read GGD and TA.

The protein in the N-terminal section; belongs to the precorrin-2 dehydrogenase / sirohydrochlorin ferrochelatase family. It in the C-terminal section; belongs to the precorrin methyltransferase family.

It catalyses the reaction uroporphyrinogen III + 2 S-adenosyl-L-methionine = precorrin-2 + 2 S-adenosyl-L-homocysteine + H(+). The catalysed reaction is precorrin-2 + NAD(+) = sirohydrochlorin + NADH + 2 H(+). The enzyme catalyses siroheme + 2 H(+) = sirohydrochlorin + Fe(2+). It participates in cofactor biosynthesis; adenosylcobalamin biosynthesis; precorrin-2 from uroporphyrinogen III: step 1/1. The protein operates within cofactor biosynthesis; adenosylcobalamin biosynthesis; sirohydrochlorin from precorrin-2: step 1/1. Its pathway is porphyrin-containing compound metabolism; siroheme biosynthesis; precorrin-2 from uroporphyrinogen III: step 1/1. It functions in the pathway porphyrin-containing compound metabolism; siroheme biosynthesis; siroheme from sirohydrochlorin: step 1/1. It participates in porphyrin-containing compound metabolism; siroheme biosynthesis; sirohydrochlorin from precorrin-2: step 1/1. Functionally, multifunctional enzyme that catalyzes the SAM-dependent methylations of uroporphyrinogen III at position C-2 and C-7 to form precorrin-2 via precorrin-1. Then it catalyzes the NAD-dependent ring dehydrogenation of precorrin-2 to yield sirohydrochlorin. Finally, it catalyzes the ferrochelation of sirohydrochlorin to yield siroheme. This chain is Siroheme synthase, found in Actinobacillus pleuropneumoniae serotype 7 (strain AP76).